A 361-amino-acid chain; its full sequence is MGIEESQICNPSDREFLSVDILNIVTSSLSLMGSALTIISYIWKKVRRHRIQKQQIQQQQQQIEKGGLLSSSITIGNGSSHYGGIGGGGGSGNGTGIGAIGGPHGTYKQPTSKLPLLIFMLSIADFFTSFFIIISQSYLINNSKSYSTPYSPDLKIHFSPCIILRAIIQFFFLSTFFWTTCISYYLFHQLSSPGEEKYLLAIFNVVSWGIPFAISMVITMTNSIVVNSDGWCEVAKPMELSLWFLPLFLCLLVCSIYYFRLRRLFRSKFEYRLQINDRLKQLDSTISRRLTLYIVVFVICWLPDVIQHFISFFSKCTFFPLLILQNILTPSQGFWNFWIYSYTNKIARFTPSNDENKRLLQ.

At 1–18 the chain is on the extracellular side; it reads MGIEESQICNPSDREFLS. A helical membrane pass occupies residues 19-39; sequence VDILNIVTSSLSLMGSALTII. The Cytoplasmic segment spans residues 40–113; sequence SYIWKKVRRH…HGTYKQPTSK (74 aa). A helical transmembrane segment spans residues 114 to 134; it reads LPLLIFMLSIADFFTSFFIII. The Extracellular segment spans residues 135–166; that stretch reads SQSYLINNSKSYSTPYSPDLKIHFSPCIILRA. The chain crosses the membrane as a helical span at residues 167 to 187; it reads IIQFFFLSTFFWTTCISYYLF. The Cytoplasmic segment spans residues 188–197; the sequence is HQLSSPGEEK. Residues 198-218 form a helical membrane-spanning segment; sequence YLLAIFNVVSWGIPFAISMVI. Residues 219 to 238 lie on the Extracellular side of the membrane; sequence TMTNSIVVNSDGWCEVAKPM. Residues 239 to 259 traverse the membrane as a helical segment; that stretch reads ELSLWFLPLFLCLLVCSIYYF. Residues 260-292 are Cytoplasmic-facing; the sequence is RLRRLFRSKFEYRLQINDRLKQLDSTISRRLTL. The helical transmembrane segment at 293–313 threads the bilayer; that stretch reads YIVVFVICWLPDVIQHFISFF. Residues 314–318 lie on the Extracellular side of the membrane; it reads SKCTF. The helical transmembrane segment at 319–339 threads the bilayer; the sequence is FPLLILQNILTPSQGFWNFWI. The Cytoplasmic portion of the chain corresponds to 340–361; it reads YSYTNKIARFTPSNDENKRLLQ.

This sequence belongs to the G-protein coupled receptor 5 family.

Its subcellular location is the membrane. Receptor for cAMP. The chain is Cyclic AMP receptor-like protein C (crlC) from Dictyostelium discoideum (Social amoeba).